The sequence spans 458 residues: Cysteine--tRNA ligase (458 aa).

Cysteine 27 lines the Zn(2+) pocket. The short motif at 29 to 39 (ITPQSEPHIGH) is the 'HIGH' region element. 3 residues coordinate Zn(2+): cysteine 207, histidine 232, and glutamate 236. The 'KMSKS' region motif lies at 265-269 (KMSKS). Residue lysine 268 coordinates ATP.

It belongs to the class-I aminoacyl-tRNA synthetase family. In terms of assembly, monomer. Requires Zn(2+) as cofactor.

The protein resides in the cytoplasm. It catalyses the reaction tRNA(Cys) + L-cysteine + ATP = L-cysteinyl-tRNA(Cys) + AMP + diphosphate. This is Cysteine--tRNA ligase from Dehalococcoides mccartyi (strain ATCC BAA-2266 / KCTC 15142 / 195) (Dehalococcoides ethenogenes (strain 195)).